Here is a 68-residue protein sequence, read N- to C-terminus: MEKFVEKMLGQALRQYGRNVAIDPLSPYEKQSLKAALQERRNEEPDEDLHAHIEDIIYDYVTNQGLFS.

This is an uncharacterized protein from Bacillus subtilis (strain 168).